The primary structure comprises 390 residues: Putative transposase y4qE (390 aa).

It belongs to the transposase IS1111A/IS1328/IS1533 family.

The polypeptide is Putative transposase y4qE (Sinorhizobium fredii (strain NBRC 101917 / NGR234)).